An 86-amino-acid chain; its full sequence is MIPAVVLLLLLLVEQAAALGEPQLCYILDAILFLYGIVLTLLYCRLKLQVRKAAIDSYEKSDGVYTGLSTRNQETYETLKHEKPPQ.

Residues 1 to 18 (MIPAVVLLLLLLVEQAAA) form the signal peptide. The Extracellular portion of the chain corresponds to 19–23 (LGEPQ). Residues 24–44 (LCYILDAILFLYGIVLTLLYC) traverse the membrane as a helical segment. Residues 45–86 (RLKLQVRKAAIDSYEKSDGVYTGLSTRNQETYETLKHEKPPQ) lie on the Cytoplasmic side of the membrane. Residues 54–82 (AIDSYEKSDGVYTGLSTRNQETYETLKHE) form the ITAM domain. Tyr-65 carries the phosphotyrosine modification. At Ser-69 the chain carries Phosphoserine. The residue at position 76 (Tyr-76) is a Phosphotyrosine. Thr-78 carries the post-translational modification Phosphothreonine.

The protein belongs to the CD3Z/FCER1G family. As to quaternary structure, igE Fc receptor is a tetramer of an alpha chain, a beta chain, and two disulfide linked gamma chains. Associates with FCGR1A; forms a functional signaling complex. The signaling subunit of immunoglobulin gamma (IgG) Fc receptor complex. As a homodimer or a heterodimer of CD247 and FCER1G, associates with the ligand binding subunit FCGR3A to form a functional receptor complex. Associates with CLEC6A. Interacts with CLEC4E. Interacts (via ITAM domain) with SYK (via SH2 domains); activates SYK, enabling integrin-mediated activation of neutrophils and macrophages. Interacts with common beta chain of interleukin 3 receptor CSF2RB and recruits SYK in response to IL3 stimulation; this interaction is direct. Interacts with CD300LH; the interaction may be indirect. Interacts with CD300LD. Interacts with TARM1.

It localises to the cell membrane. Its function is as follows. Adapter protein containing an immunoreceptor tyrosine-based activation motif (ITAM) that transduces activation signals from various immunoreceptors. As a component of the high-affinity immunoglobulin E (IgE) receptor, mediates allergic inflammatory signaling in mast cells. As a constitutive component of interleukin-3 receptor complex, selectively mediates interleukin 4/IL4 production b basophils priming T-cells toward effector T-helper 2 subset. Associates with pattern recognition receptors CLEC4D and CLEC4E to form a functional signaling complex in myeloid cells. Binding of mycobacterial trehalose 6,6'-dimycolate (TDM) to this receptor complex leads to phosphorylation of ITAM, triggering activation of SYK, CARD9 and NF-kappa-B, consequently driving maturation of antigen-presenting cells and shaping antigen-specific priming of T-cells toward effector T-helper 1 and T-helper 17 cell subtypes. May function cooperatively with other activating receptors. Functionally linked to integrin beta-2/ITGB2-mediated neutrophil activation. Also involved in integrin alpha-2/ITGA2-mediated platelet activation. This Sus scrofa (Pig) protein is High affinity immunoglobulin epsilon receptor subunit gamma (FCER1G).